The sequence spans 101 residues: MEIDIKNECRKYIIQFRNWLESRYSDNIYFFNVFEDEEIILMQIKINMKKKEYEKAGMSMLKYLVRTFKYPNYIKVNWRYDKNMFKISAICGDINMSESNN.

This is an uncharacterized protein from Saccharolobus islandicus (Sulfolobus islandicus).